Reading from the N-terminus, the 1400-residue chain is DNA-directed RNA polymerase subunit beta (1400 aa).

Belongs to the RNA polymerase beta chain family. In terms of assembly, the RNAP catalytic core consists of 2 alpha, 1 beta, 1 beta' and 1 omega subunit. When a sigma factor is associated with the core the holoenzyme is formed, which can initiate transcription.

The enzyme catalyses RNA(n) + a ribonucleoside 5'-triphosphate = RNA(n+1) + diphosphate. DNA-dependent RNA polymerase catalyzes the transcription of DNA into RNA using the four ribonucleoside triphosphates as substrates. The chain is DNA-directed RNA polymerase subunit beta from Acidiphilium cryptum (strain JF-5).